The chain runs to 231 residues: Transmembrane gamma-carboxyglutamic acid protein 3 (231 aa).

A propeptide spanning residues 1–19 (MAVFLEAKNAHAVLKRFPR) is cleaved from the precursor. The region spanning 20–65 (ANEFLEELRQGTIERECMEEICSYEEVKEVFENKEKTMEFWKGYPN) is the Gla domain. Over 20-78 (ANEFLEELRQGTIERECMEEICSYEEVKEVFENKEKTMEFWKGYPNAVYSVRDPSQSSD) the chain is Extracellular. 4-carboxyglutamate is present on residues Glu22, Glu25, Glu26, Glu33, Glu35, Glu38, Glu39, Glu44, Glu45, Glu48, Glu51, Glu54, and Glu58. Cysteines 36 and 41 form a disulfide. A helical transmembrane segment spans residues 79–101 (AMYVVVPLLGVVLLIVIALFIIW). Topologically, residues 102-231 (RCQLQKATRH…IVAASPSADK (130 aa)) are cytoplasmic. Disordered stretches follow at residues 140–165 (HSQG…SRGG) and 184–231 (RLSS…SADK). Polar residues predominate over residues 201–212 (QEGSSEEASVSY).

Gla residues are produced after subsequent post-translational modifications of glutamate by a vitamin K-dependent gamma-carboxylase.

The protein localises to the membrane. The sequence is that of Transmembrane gamma-carboxyglutamic acid protein 3 (Prrg3) from Mus musculus (Mouse).